Reading from the N-terminus, the 804-residue chain is Phenylalanine--tRNA ligase beta subunit (804 aa).

The tRNA-binding domain occupies 38-148 (RSSLKGFVIA…EDAPIGGLFA (111 aa)). The 76-residue stretch at 401–476 (PEIKQIAFPF…RIYGLDKIEP (76 aa)) folds into the B5 domain. Aspartate 454, aspartate 460, glutamate 463, and glutamate 464 together coordinate Mg(2+). The FDX-ACB domain occupies 710–803 (SPFQMVRRDF…VTKATGAYLR (94 aa)).

The protein belongs to the phenylalanyl-tRNA synthetase beta subunit family. Type 1 subfamily. Tetramer of two alpha and two beta subunits. Mg(2+) is required as a cofactor.

It localises to the cytoplasm. It catalyses the reaction tRNA(Phe) + L-phenylalanine + ATP = L-phenylalanyl-tRNA(Phe) + AMP + diphosphate + H(+). In Bartonella quintana (strain Toulouse) (Rochalimaea quintana), this protein is Phenylalanine--tRNA ligase beta subunit.